The sequence spans 224 residues: Orotate phosphoribosyltransferase (224 aa).

Residues lysine 26, 73-74 (YK), arginine 100, lysine 101, lysine 104, histidine 106, and 127-135 (EDVTTSGKS) each bind 5-phospho-alpha-D-ribose 1-diphosphate. Threonine 131 and arginine 160 together coordinate orotate.

This sequence belongs to the purine/pyrimidine phosphoribosyltransferase family. PyrE subfamily. Homodimer. The cofactor is Mg(2+).

It carries out the reaction orotidine 5'-phosphate + diphosphate = orotate + 5-phospho-alpha-D-ribose 1-diphosphate. The protein operates within pyrimidine metabolism; UMP biosynthesis via de novo pathway; UMP from orotate: step 1/2. Its function is as follows. Catalyzes the transfer of a ribosyl phosphate group from 5-phosphoribose 1-diphosphate to orotate, leading to the formation of orotidine monophosphate (OMP). The polypeptide is Orotate phosphoribosyltransferase (Clostridium botulinum (strain Eklund 17B / Type B)).